Here is a 509-residue protein sequence, read N- to C-terminus: Inositol-3-phosphate synthase 1 (509 aa).

It belongs to the myo-inositol 1-phosphate synthase family. The cofactor is NAD(+). In terms of tissue distribution, highly expressed in anthers, but transcripts are undetectable in roots, leaves, flowers and embryos.

It localises to the cytoplasm. It catalyses the reaction D-glucose 6-phosphate = 1D-myo-inositol 3-phosphate. Its pathway is polyol metabolism; myo-inositol biosynthesis; myo-inositol from D-glucose 6-phosphate: step 1/2. Key enzyme in myo-inositol biosynthesis pathway that catalyzes the conversion of glucose 6-phosphate to 1-myo-inositol 1-phosphate in a NAD-dependent manner. Is a key enzyme in the phytic acid biosynthesis pathway in seeds. The protein is Inositol-3-phosphate synthase 1 of Oryza sativa subsp. japonica (Rice).